The following is a 269-amino-acid chain: HTH-type transcriptional regulator Rv0792c (269 aa).

The HTH gntR-type domain maps to 20-88 (VPASTQLAEA…QGLGTFVADP (69 aa)). Positions 48–67 (ERELIDRSGLSRVTVRAAVG) form a DNA-binding region, H-T-H motif.

In terms of assembly, homodimer.

With respect to regulation, DNA-binding activity is increased in the presence of L-arabinose and inhibited by the small molecule I-OMe-Tyrphostin. Its function is as follows. Transcriptional regulator required for survival in oxidative stress and for establishing infection in host tissues. Regulates the expression of a subset of genes involved in oxidative stress adaptation and virulence, enabling the bacteria to adapt and persist in host tissues. This chain is HTH-type transcriptional regulator Rv0792c, found in Mycobacterium tuberculosis (strain ATCC 25618 / H37Rv).